The following is a 433-amino-acid chain: DNA methyltransferase 1-associated protein 1 (433 aa).

Residues 1-204 form a required for nuclear localization region; that stretch reads MSADVRDILD…EVVALLAKAK (204 aa). The region spanning 148–197 is the Myb-like domain; it reads NNWSKVQTDHLFDLARRFDLRFIVMADRWNRQQHGTKTVEELKERYYEVV. Residues 186-281 adopt a coiled-coil conformation; sequence VEELKERYYE…ADQQNEHASN (96 aa). Positions 252–264 are enriched in basic and acidic residues; that stretch reads EARKKERERKTQD. Residues 252–305 form a disordered region; it reads EARKKERERKTQDLQKLISQADQQNEHASNTPSTRKYEKKLHKKKVHQQPRPSR. Polar residues predominate over residues 268-285; it reads LISQADQQNEHASNTPST. Over residues 288 to 299 the composition is skewed to basic residues; sequence YEKKLHKKKVHQ.

In terms of assembly, interacts with Rel. Interacts with akirin and Bap55.

The protein resides in the nucleus. Its subcellular location is the cytoplasm. Functionally, involved in transcription repression and activation. Required for larvae and pupal development, and for normal innate immune responses. Involved in modulating the activation of the immune deficiency pathway (Imd), acting either downstream of, or at the level of, the NF-kappa-B factor Rel. Possibly functions with akirin to regulate Rel, and its interaction with the Brahma complex protein Bap55 suggests that it may regulate the IMD pathway at the level of chromatin remodeling. The sequence is that of DNA methyltransferase 1-associated protein 1 from Drosophila melanogaster (Fruit fly).